A 180-amino-acid chain; its full sequence is ATP synthase subunit delta (180 aa).

The protein belongs to the ATPase delta chain family. F-type ATPases have 2 components, F(1) - the catalytic core - and F(0) - the membrane proton channel. F(1) has five subunits: alpha(3), beta(3), gamma(1), delta(1), epsilon(1). F(0) has three main subunits: a(1), b(2) and c(10-14). The alpha and beta chains form an alternating ring which encloses part of the gamma chain. F(1) is attached to F(0) by a central stalk formed by the gamma and epsilon chains, while a peripheral stalk is formed by the delta and b chains.

It is found in the cell membrane. Its function is as follows. F(1)F(0) ATP synthase produces ATP from ADP in the presence of a proton or sodium gradient. F-type ATPases consist of two structural domains, F(1) containing the extramembraneous catalytic core and F(0) containing the membrane proton channel, linked together by a central stalk and a peripheral stalk. During catalysis, ATP synthesis in the catalytic domain of F(1) is coupled via a rotary mechanism of the central stalk subunits to proton translocation. Functionally, this protein is part of the stalk that links CF(0) to CF(1). It either transmits conformational changes from CF(0) to CF(1) or is implicated in proton conduction. This chain is ATP synthase subunit delta, found in Leuconostoc citreum (strain KM20).